The chain runs to 231 residues: 2-C-methyl-D-erythritol 4-phosphate cytidylyltransferase (231 aa).

Belongs to the IspD/TarI cytidylyltransferase family. IspD subfamily.

The enzyme catalyses 2-C-methyl-D-erythritol 4-phosphate + CTP + H(+) = 4-CDP-2-C-methyl-D-erythritol + diphosphate. Its pathway is isoprenoid biosynthesis; isopentenyl diphosphate biosynthesis via DXP pathway; isopentenyl diphosphate from 1-deoxy-D-xylulose 5-phosphate: step 2/6. Catalyzes the formation of 4-diphosphocytidyl-2-C-methyl-D-erythritol from CTP and 2-C-methyl-D-erythritol 4-phosphate (MEP). In Pseudoalteromonas atlantica (strain T6c / ATCC BAA-1087), this protein is 2-C-methyl-D-erythritol 4-phosphate cytidylyltransferase.